The chain runs to 365 residues: Leu/Ile/Val/Thr-binding protein (365 aa).

A signal peptide spans 1–21 (MKGKTLLAGCIALSLSHMAFA). C74 and C99 are oxidised to a cystine.

This sequence belongs to the leucine-binding protein family.

The protein resides in the periplasm. This protein is a component of the leucine, isoleucine, valine, threonine transport system, which is one of the two periplasmic binding protein-dependent transport systems of the high-affinity transport of the branched-chain amino acids. The protein is Leu/Ile/Val/Thr-binding protein (livJ) of Salmonella typhimurium (strain LT2 / SGSC1412 / ATCC 700720).